The chain runs to 333 residues: Structure-specific endonuclease subunit SLX1 homolog (333 aa).

The 90-residue stretch at 68–157 (DFFGVYCLLS…KSRRLRLLNL (90 aa)) folds into the GIY-YIG domain. The segment at 237–293 (CSLCLKPILSISELLRCHANETCKSHFHMRCLSKHALNAVDEYRTSLFPIQGQCPKC) adopts an SLX1-type zinc-finger fold.

This sequence belongs to the SLX1 family. In terms of assembly, forms a heterodimer with a member of the SLX4 family. Requires a divalent metal cation as cofactor.

It is found in the nucleus. Its function is as follows. Catalytic subunit of a heterodimeric structure-specific endonuclease that resolves DNA secondary structures generated during DNA repair and recombination. Has endonuclease activity towards branched DNA substrates, introducing single-strand cuts in duplex DNA close to junctions with ss-DNA. The protein is Structure-specific endonuclease subunit SLX1 homolog of Brugia malayi (Filarial nematode worm).